The chain runs to 226 residues: ATP-dependent dethiobiotin synthetase BioD (226 aa).

Residue Glu-12 to Val-17 coordinates ATP. Residue Thr-16 coordinates Mg(2+). Lys-39 is a catalytic residue. Residue Thr-43 participates in substrate binding. Residues Asp-47, Glu-108–Gly-111, Asn-168–Cys-169, and Pro-200–Ile-202 each bind ATP. Asp-47 and Glu-108 together coordinate Mg(2+).

It belongs to the dethiobiotin synthetase family. As to quaternary structure, homodimer. It depends on Mg(2+) as a cofactor.

The protein resides in the cytoplasm. It catalyses the reaction (7R,8S)-7,8-diammoniononanoate + CO2 + ATP = (4R,5S)-dethiobiotin + ADP + phosphate + 3 H(+). The enzyme catalyses (7R,8S)-8-amino-7-(carboxyamino)nonanoate + ATP = (4R,5S)-dethiobiotin + ADP + phosphate + H(+). Its pathway is cofactor biosynthesis; biotin biosynthesis; biotin from 7,8-diaminononanoate: step 1/2. Functionally, catalyzes a mechanistically unusual reaction, the ATP-dependent insertion of CO2 between the N7 and N8 nitrogen atoms of 7,8-diaminopelargonic acid (DAPA, also called 7,8-diammoniononanoate) to form a ureido ring. This cyanobacterium does not encode bioA (which catalyzes the formation of the precursor for this reaction in the cannonical pathway), instead it encodes bioU, which replaces bioA and also performs the first half of the cannonical BioD reaction. Thus in this organism BioD has a different substrate. In Gloeothece citriformis (strain PCC 7424) (Cyanothece sp. (strain PCC 7424)), this protein is ATP-dependent dethiobiotin synthetase BioD.